A 161-amino-acid polypeptide reads, in one-letter code: Mediator of RNA polymerase II transcription subunit 31 (161 aa).

A disordered region spans residues 124–161 (GTGVDEQGAQDTQEGEGEQKQNKEEDAQDAQENTESKT).

It belongs to the Mediator complex subunit 31 family. Component of the Mediator complex.

It is found in the nucleus. Functionally, component of the Mediator complex, a coactivator involved in the regulated transcription of nearly all RNA polymerase II-dependent genes. Mediator functions as a bridge to convey information from gene-specific regulatory proteins to the basal RNA polymerase II transcription machinery. Mediator is recruited to promoters by direct interactions with regulatory proteins and serves as a scaffold for the assembly of a functional preinitiation complex with RNA polymerase II and the general transcription factors. The polypeptide is Mediator of RNA polymerase II transcription subunit 31 (soh1) (Aspergillus clavatus (strain ATCC 1007 / CBS 513.65 / DSM 816 / NCTC 3887 / NRRL 1 / QM 1276 / 107)).